The sequence spans 260 residues: Thiazole synthase (260 aa).

The Schiff-base intermediate with DXP role is filled by Lys-96. Residues Gly-157, 184-185, and 206-207 each bind 1-deoxy-D-xylulose 5-phosphate; these read AG and NT.

The protein belongs to the ThiG family. As to quaternary structure, homotetramer. Forms heterodimers with either ThiH or ThiS.

The protein localises to the cytoplasm. The catalysed reaction is [ThiS sulfur-carrier protein]-C-terminal-Gly-aminoethanethioate + 2-iminoacetate + 1-deoxy-D-xylulose 5-phosphate = [ThiS sulfur-carrier protein]-C-terminal Gly-Gly + 2-[(2R,5Z)-2-carboxy-4-methylthiazol-5(2H)-ylidene]ethyl phosphate + 2 H2O + H(+). It participates in cofactor biosynthesis; thiamine diphosphate biosynthesis. Catalyzes the rearrangement of 1-deoxy-D-xylulose 5-phosphate (DXP) to produce the thiazole phosphate moiety of thiamine. Sulfur is provided by the thiocarboxylate moiety of the carrier protein ThiS. In vitro, sulfur can be provided by H(2)S. The polypeptide is Thiazole synthase (Rhodopseudomonas palustris (strain HaA2)).